The sequence spans 259 residues: uncharacterized protein (259 aa).

In terms of domain architecture, FAD-binding PCMH-type spans 1-159; sequence MIEQFFRPDS…TEIIIKDPYR (159 aa).

This is an uncharacterized protein from Escherichia coli O157:H7.